We begin with the raw amino-acid sequence, 167 residues long: Transmembrane protein B169L (167 aa).

The next 2 helical transmembrane spans lie at 28 to 48 (NPFI…FAIC) and 60 to 80 (TAIY…YVLN). N-linked (GlcNAc...) asparagine; by host glycosylation is present at Asn-88.

Belongs to the asfivirus B169L family.

Its subcellular location is the host membrane. It localises to the virion. This chain is Transmembrane protein B169L, found in African swine fever virus (isolate Tick/Malawi/Lil 20-1/1983) (ASFV).